Consider the following 271-residue polypeptide: Formamidopyrimidine-DNA glycosylase (271 aa).

Catalysis depends on Pro-2, which acts as the Schiff-base intermediate with DNA. Glu-3 functions as the Proton donor in the catalytic mechanism. Lys-57 (proton donor; for beta-elimination activity) is an active-site residue. 3 residues coordinate DNA: His-90, Arg-109, and Lys-151. The FPG-type zinc finger occupies 236-270; the sequence is HVYGRGGETCTQCGHLLSEIKLGQRATVFCSLCQK. Residue Arg-260 is the Proton donor; for delta-elimination activity of the active site.

The protein belongs to the FPG family. Monomer. Zn(2+) serves as cofactor.

The enzyme catalyses Hydrolysis of DNA containing ring-opened 7-methylguanine residues, releasing 2,6-diamino-4-hydroxy-5-(N-methyl)formamidopyrimidine.. It catalyses the reaction 2'-deoxyribonucleotide-(2'-deoxyribose 5'-phosphate)-2'-deoxyribonucleotide-DNA = a 3'-end 2'-deoxyribonucleotide-(2,3-dehydro-2,3-deoxyribose 5'-phosphate)-DNA + a 5'-end 5'-phospho-2'-deoxyribonucleoside-DNA + H(+). Involved in base excision repair of DNA damaged by oxidation or by mutagenic agents. Acts as a DNA glycosylase that recognizes and removes damaged bases. Has a preference for oxidized purines, such as 7,8-dihydro-8-oxoguanine (8-oxoG). Has AP (apurinic/apyrimidinic) lyase activity and introduces nicks in the DNA strand. Cleaves the DNA backbone by beta-delta elimination to generate a single-strand break at the site of the removed base with both 3'- and 5'-phosphates. The chain is Formamidopyrimidine-DNA glycosylase from Shewanella halifaxensis (strain HAW-EB4).